The chain runs to 236 residues: 7-cyano-7-deazaguanine synthase (236 aa).

7-17 (CSGGLDSVSLA) provides a ligand contact to ATP. Positions 185, 193, 196, and 199 each coordinate Zn(2+).

The protein belongs to the QueC family. Zn(2+) is required as a cofactor.

It catalyses the reaction 7-carboxy-7-deazaguanine + NH4(+) + ATP = 7-cyano-7-deazaguanine + ADP + phosphate + H2O + H(+). It functions in the pathway purine metabolism; 7-cyano-7-deazaguanine biosynthesis. Functionally, catalyzes the ATP-dependent conversion of 7-carboxy-7-deazaguanine (CDG) to 7-cyano-7-deazaguanine (preQ(0)). This Agrobacterium fabrum (strain C58 / ATCC 33970) (Agrobacterium tumefaciens (strain C58)) protein is 7-cyano-7-deazaguanine synthase.